We begin with the raw amino-acid sequence, 127 residues long: Large ribosomal subunit protein bL12 (127 aa).

It belongs to the bacterial ribosomal protein bL12 family. In terms of assembly, homodimer. Part of the ribosomal stalk of the 50S ribosomal subunit. Forms a multimeric L10(L12)X complex, where L10 forms an elongated spine to which 2 to 4 L12 dimers bind in a sequential fashion. Binds GTP-bound translation factors.

In terms of biological role, forms part of the ribosomal stalk which helps the ribosome interact with GTP-bound translation factors. Is thus essential for accurate translation. The sequence is that of Large ribosomal subunit protein bL12 from Syntrophotalea carbinolica (strain DSM 2380 / NBRC 103641 / GraBd1) (Pelobacter carbinolicus).